We begin with the raw amino-acid sequence, 2008 residues long: Histone-lysine N-methyltransferase SETD1B (2008 aa).

Basic and acidic residues predominate over residues 1–20 (MSFREIKAGEKAKHPEDHGK). The interval 1-42 (MSFREIKAGEKAKHPEDHGKKQSSSWINGMENSTQASTSVEK) is disordered. A compositionally biased stretch (polar residues) spans 22 to 39 (QSSSWINGMENSTQASTS). The RRM domain occupies 111-199 (DEFYVGPVPP…NIIHVELDTK (89 aa)). Disordered stretches follow at residues 249–390 (NLSS…SSYK), 402–652 (FPQS…APIT), 682–725 (PPGF…PPLP), 950–1172 (RKEP…DKRE), 1309–1328 (TKLP…PGRE), 1345–1461 (VPSS…FTPT), 1563–1600 (VGAS…MYSG), 1674–1712 (KEEE…PQFR), and 1814–1842 (EEPP…RRSE). The span at 251-264 (SSVGSSVTPNSSTP) shows a compositional bias: low complexity. Composition is skewed to polar residues over residues 265–293 (FSHD…QGTP), 301–315 (PFSQ…QTTP), 360–381 (HQFS…TPPL), 405–414 (SEEQPFAQTS), and 456–491 (DSNS…QHNS). Residues 492-521 (LDSRIEMLLKEQRTKLPFLNEHDSDNEVRM) are compositionally biased toward basic and acidic residues. Low complexity predominate over residues 524 to 537 (SPISSSSSQLSPIP). Polar residues-rich tracts occupy residues 540–560 (GSNS…SSTG) and 582–604 (ASLN…QLNR). Basic and acidic residues-rich tracts occupy residues 606–617 (SKVETLEVKEMV) and 626–636 (EKMDESQHSSG). Residues 637–646 (EDMEISDDEM) are compositionally biased toward acidic residues. Residues 979-997 (ERDRDASDTTSDLSKKDAE) show a composition bias toward basic and acidic residues. Residues 1011-1020 (LDSEGEEGDE) are compositionally biased toward acidic residues. Residues 1021–1031 (TSGKEEESSSE) show a composition bias toward basic and acidic residues. Acidic residues-rich tracts occupy residues 1050-1094 (EEEE…EEDA) and 1105-1149 (ESSD…EDQD). Over residues 1150-1172 (REAMVAETEHEPASHELPDDKRE) the composition is skewed to basic and acidic residues. Positions 1345-1356 (VPSSTVPLPSTP) are enriched in low complexity. Residues 1378–1392 (SIEEEIPRTPGRDIL) show a composition bias toward basic and acidic residues. Low complexity predominate over residues 1418–1427 (LTGSSLTLSS). Basic residues-rich tracts occupy residues 1577 to 1587 (LPKRRPGRPRR) and 1681 to 1690 (KPKRQWRRQK). The segment covering 1699-1710 (IPSPEYSPPQPQ) has biased composition (pro residues). Positions 1840 to 1845 (RSEQRR) match the RxxxRR motif motif. The SET domain occupies 1869–1986 (KKLKFCKSHI…VNEEITYDYK (118 aa)). Tyr1985 lines the S-adenosyl-L-methionine pocket. The Post-SET domain maps to 1992 to 2008 (VKIPCLCGSENCRGTLN).

The protein belongs to the class V-like SAM-binding methyltransferase superfamily. As to quaternary structure, component of the SET1B/COMPASS complex.

It localises to the nucleus speckle. Its subcellular location is the chromosome. The catalysed reaction is L-lysyl(4)-[histone H3] + 3 S-adenosyl-L-methionine = N(6),N(6),N(6)-trimethyl-L-lysyl(4)-[histone H3] + 3 S-adenosyl-L-homocysteine + 3 H(+). Functionally, histone methyltransferase that specifically methylates 'Lys-4' of histone H3, when part of the SET1 histone methyltransferase (HMT) complex, but not if the neighboring 'Lys-9' residue is already methylated. H3 'Lys-4' methylation represents a specific tag for epigenetic transcriptional activation. This is Histone-lysine N-methyltransferase SETD1B (SETD1B) from Gallus gallus (Chicken).